The primary structure comprises 426 residues: Serine--tRNA ligase (426 aa).

233–235 (TAE) provides a ligand contact to L-serine. Residue 264–266 (RRE) participates in ATP binding. Residue Glu-287 participates in L-serine binding. ATP is bound at residue 351–354 (EISS). Ser-386 is a binding site for L-serine.

It belongs to the class-II aminoacyl-tRNA synthetase family. Type-1 seryl-tRNA synthetase subfamily. Homodimer. The tRNA molecule binds across the dimer.

Its subcellular location is the cytoplasm. The enzyme catalyses tRNA(Ser) + L-serine + ATP = L-seryl-tRNA(Ser) + AMP + diphosphate + H(+). The catalysed reaction is tRNA(Sec) + L-serine + ATP = L-seryl-tRNA(Sec) + AMP + diphosphate + H(+). Its pathway is aminoacyl-tRNA biosynthesis; selenocysteinyl-tRNA(Sec) biosynthesis; L-seryl-tRNA(Sec) from L-serine and tRNA(Sec): step 1/1. In terms of biological role, catalyzes the attachment of serine to tRNA(Ser). Is also able to aminoacylate tRNA(Sec) with serine, to form the misacylated tRNA L-seryl-tRNA(Sec), which will be further converted into selenocysteinyl-tRNA(Sec). The polypeptide is Serine--tRNA ligase (Thermosipho africanus (strain TCF52B)).